A 1387-amino-acid polypeptide reads, in one-letter code: DNA-directed RNA polymerase subunit beta'' (1387 aa).

Positions 220, 291, 298, and 301 each coordinate Zn(2+).

It belongs to the RNA polymerase beta' chain family. RpoC2 subfamily. As to quaternary structure, in plastids the minimal PEP RNA polymerase catalytic core is composed of four subunits: alpha, beta, beta', and beta''. When a (nuclear-encoded) sigma factor is associated with the core the holoenzyme is formed, which can initiate transcription. Requires Zn(2+) as cofactor.

It is found in the plastid. The protein localises to the chloroplast. The catalysed reaction is RNA(n) + a ribonucleoside 5'-triphosphate = RNA(n+1) + diphosphate. In terms of biological role, DNA-dependent RNA polymerase catalyzes the transcription of DNA into RNA using the four ribonucleoside triphosphates as substrates. In Carica papaya (Papaya), this protein is DNA-directed RNA polymerase subunit beta''.